The chain runs to 264 residues: COP9 signalosome complex subunit 7b (264 aa).

A2 is subject to N-acetylalanine. In terms of domain architecture, PCI spans 2–159; it reads AGEQKPSSNL…QLLEVDFCIG (158 aa). Positions 188–237 form a coiled coil; that stretch reads IEQQVLRANQYKENHNRTQQQVEAEVTNIKKTLKATASSSAQEMEQQLAE. A compositionally biased stretch (polar residues) spans 223–232; sequence TASSSAQEME. The tract at residues 223–264 is disordered; it reads TASSSAQEMEQQLAERECPPHAEQRQPTKKMSKVKGLVSSRH. Positions 235 to 248 are enriched in basic and acidic residues; that stretch reads LAERECPPHAEQRQ. At S261 the chain carries Phosphothreonine. R263 is subject to Phosphoserine.

This sequence belongs to the CSN7/EIF3M family. CSN7 subfamily. As to quaternary structure, component of the CSN complex, composed of COPS1/GPS1, COPS2, COPS3, COPS4, COPS5, COPS6, COPS7 (COPS7A or COPS7B), COPS8 and COPS9 isoform 1. In the complex, it probably interacts directly with COPS1, COPS2, COPS4, COPS5, COPS6 and COPS8. Interacts with EIF3S6. In terms of assembly, (Microbial infection) Interacts with vaccinia virus protein C9L.

The protein localises to the cytoplasm. It localises to the nucleus. Component of the COP9 signalosome complex (CSN), a complex involved in various cellular and developmental processes. The CSN complex is an essential regulator of the ubiquitin (Ubl) conjugation pathway by mediating the deneddylation of the cullin subunits of SCF-type E3 ligase complexes, leading to decrease the Ubl ligase activity of SCF-type complexes such as SCF, CSA or DDB2. The complex is also involved in phosphorylation of p53/TP53, JUN, I-kappa-B-alpha/NFKBIA, ITPK1 and IRF8/ICSBP, possibly via its association with CK2 and PKD kinases. CSN-dependent phosphorylation of TP53 and JUN promotes and protects degradation by the Ubl system, respectively. The protein is COP9 signalosome complex subunit 7b (COPS7B) of Homo sapiens (Human).